Reading from the N-terminus, the 162-residue chain is MELLAPNLRVVFCGINPGLSSAHQGYPFANGSNRFWKVIHQAGFTESQLAPEQWQQLKDNGCGITALVARPTVAASELSRDELRSGGEALQEKILRYQPRALAILGKQAFTTAFGVKNAPWGKQTLTLGETEVWVLPNPSGLNRATLEQLTASYRELFLALQ.

The protein belongs to the uracil-DNA glycosylase (UDG) superfamily. TDG/mug family. In terms of assembly, binds DNA as a monomer.

The protein resides in the cytoplasm. It carries out the reaction Specifically hydrolyzes mismatched double-stranded DNA and polynucleotides, releasing free uracil.. Its function is as follows. Excises ethenocytosine and uracil, which can arise by alkylation or deamination of cytosine, respectively, from the corresponding mispairs with guanine in ds-DNA. It is capable of hydrolyzing the carbon-nitrogen bond between the sugar-phosphate backbone of the DNA and the mispaired base. The complementary strand guanine functions in substrate recognition. Required for DNA damage lesion repair in stationary-phase cells. The chain is G/U mismatch-specific DNA glycosylase from Serratia marcescens.